The chain runs to 271 residues: Short-chain dehydrogenase ptmH (271 aa).

NADP(+) contacts are provided by Ile8, Thr34, Lys40, Asp56, Asn84, Tyr148, Lys152, Val181, and Thr183. Tyr148 serves as the catalytic Proton acceptor. Residue Lys152 is the Lowers pKa of active site Tyr of the active site.

This sequence belongs to the short-chain dehydrogenases/reductases (SDR) family.

It participates in secondary metabolite biosynthesis. Its function is as follows. Short-chain dehydrogenase; part of the gene cluster that mediates the biosynthesis of the indole diterpenes penitrems. The geranylgeranyl diphosphate (GGPP) synthase ptmG catalyzes the first step in penitrem biosynthesis via conversion of farnesyl pyrophosphate and isopentyl pyrophosphate into geranylgeranyl pyrophosphate (GGPP). Condensation of indole-3-glycerol phosphate with GGPP by the prenyl transferase ptmC then forms 3-geranylgeranylindole (3-GGI). Epoxidation by the FAD-dependent monooxygenase ptmM leads to a epoxidized-GGI that is substrate of the terpene cyclase ptmB for cyclization to yield paspaline. Paspaline is subsequently converted to 13-desoxypaxilline by the cytochrome P450 monooxygenase ptmP, the latter being then converted to paxilline by the cytochrome P450 monooxygenase ptmQ. Paxilline is converted to beta-paxitriol via C-10 ketoreduction by the short-chain dehydrogenase ptmH which can be monoprenylated at the C-20 by the indole diterpene prenyltransferase ptmD. A two-step elimination (acetylation and elimination) process performed by the O-acetyltransferase ptmV and ptmI leads to the production of the prenylated form of penijanthine. The FAD-linked oxidoreductase ptmO then converts the prenylated form of penijanthine into PC-M5 which is in turn transformed into PC-M4 by the aromatic dimethylallyltransferase ptmE. Five sequential oxidative transformations performed by the cytochrome P450 monooxygenases ptmK, ptmU, ptmL, ptmN and ptmJ yield the various penitrem compounds. PtmK, ptmU and ptmM are involved in the formation of the key bicyclic ring of penitrem C via the formation of the intermediates secopenitrem D and penitrem D. PtmL catalyzes the epoxidation of penitrem D and C to yield penitrem B and F, respectively. PtmJ catalyzes the last benzylic hydroxylation to convert penitrem B to prenitrem E and penitrem F to penitrem A. The chain is Short-chain dehydrogenase ptmH from Penicillium ochrochloron.